A 218-amino-acid polypeptide reads, in one-letter code: Small ribosomal subunit protein uS3 (218 aa).

The KH type-2 domain maps to 38–106 (LRNDLKKKLM…PVHLNIEEVK (69 aa)).

The protein belongs to the universal ribosomal protein uS3 family. Part of the 30S ribosomal subunit. Forms a tight complex with proteins S10 and S14.

Functionally, binds the lower part of the 30S subunit head. Binds mRNA in the 70S ribosome, positioning it for translation. The protein is Small ribosomal subunit protein uS3 of Legionella pneumophila (strain Paris).